A 291-amino-acid polypeptide reads, in one-letter code: Polyamine aminopropyltransferase (291 aa).

Residues 5–245 form the PABS domain; that stretch reads PGPIVLMEPL…YAVNFVLGSL (241 aa). Residue Gln-36 coordinates S-methyl-5'-thioadenosine. Spermidine contacts are provided by His-67 and Glu-91. S-methyl-5'-thioadenosine-binding positions include Asp-111 and 143–144; that span reads DG. The Proton acceptor role is filled by Asp-164.

Belongs to the spermidine/spermine synthase family. In terms of assembly, homodimer or homotetramer.

The protein localises to the cytoplasm. It catalyses the reaction norspermidine + S-adenosyl 3-(methylsulfanyl)propylamine = norspermine + S-methyl-5'-thioadenosine + H(+). The enzyme catalyses S-adenosyl 3-(methylsulfanyl)propylamine + spermidine = thermospermine + S-methyl-5'-thioadenosine + H(+). In terms of biological role, involved in the biosynthesis of polyamines which are thought to support the growth of thermophilic microorganisms under high-temperature conditions. It seems that long-chain and branched-chain of polyamines effectively stabilize DNA and RNA, respectively. Catalyzes the irreversible transfer of a propylamine group from the amino donor S-adenosylmethioninamine (decarboxy-AdoMet) to norspermidine and 1,3-diaminopropane to yield norspermine, and to spermidine to yield thermospermine. It can also synthesize thermospermine from putrescine (1,4-diaminobutane) and caldopentamine from norspermine with a very low activity. The biosynthesis of caldohexamine and caldoheptamine from caldopentamine has been also observed. In Pyrobaculum aerophilum (strain ATCC 51768 / DSM 7523 / JCM 9630 / CIP 104966 / NBRC 100827 / IM2), this protein is Polyamine aminopropyltransferase.